The chain runs to 939 residues: AP-2 complex subunit alpha (939 aa).

Residues 623 to 633 (RVPENEIRESK) are compositionally biased toward basic and acidic residues. Residues 623–660 (RVPENEIRESKSPAPTSGPGSVLQNNVHVNNSHSKLNN) form a disordered region. Over residues 635-660 (PAPTSGPGSVLQNNVHVNNSHSKLNN) the composition is skewed to polar residues.

The protein belongs to the adapter complexes large subunit family. In terms of assembly, adaptor protein complex 2 (AP-2) is a heterotetramer composed of two large adaptins (alpha-type and beta-type subunits), a medium adaptin (mu-type subunit AP50) and a small adaptin (sigma-type subunit AP17).

It is found in the cell membrane. The protein localises to the membrane. The protein resides in the coated pit. Adaptins are components of the adapter complexes which link clathrin to receptors in coated vesicles. Clathrin-associated protein complexes are believed to interact with the cytoplasmic tails of membrane proteins, leading to their selection and concentration. Alpha adaptin is a subunit of the plasma membrane adapter. The protein is AP-2 complex subunit alpha of Drosophila pseudoobscura pseudoobscura (Fruit fly).